A 78-amino-acid chain; its full sequence is Spermatid-specific protein T1 (78 aa).

Positions 1 to 21 (MKVAANSSKMLAEKLELMKGG) are hydrophobic. The tract at residues 1 to 78 (MKVAANSSKM…YSRRRYRRRR (78 aa)) is disordered. Over residues 20-78 (GGRRRRRRSRRRRRRSRRRSRSPYRRRYRRRRRRRRRRSRRRRYRRRRSYSRRRYRRRR) the composition is skewed to basic residues.

In terms of processing, phosphorylation occurs at different degrees. The triphosphorylated form may be predominant in T1. SP1 appears to be phosphorylated in elongated spermatids, but dephosphorylated in mature sperm cells. Testis.

The protein resides in the nucleus. The protein localises to the chromosome. Its function is as follows. Cuttlefish spermiogenesis is characterized by a double nuclear protein transition: histones -&gt; spermatid-specific proteins (T1/T2) -&gt; protamines (SP1/SP2). The protamines compact sperm DNA into a highly condensed, stable and inactive complex. This chain is Spermatid-specific protein T1, found in Sepia officinalis (Common cuttlefish).